A 255-amino-acid polypeptide reads, in one-letter code: Ribonuclease PH (255 aa).

Phosphate-binding positions include Arg86 and 124–126 (GTR).

The protein belongs to the RNase PH family. As to quaternary structure, homohexameric ring arranged as a trimer of dimers.

It catalyses the reaction tRNA(n+1) + phosphate = tRNA(n) + a ribonucleoside 5'-diphosphate. In terms of biological role, phosphorolytic 3'-5' exoribonuclease that plays an important role in tRNA 3'-end maturation. Removes nucleotide residues following the 3'-CCA terminus of tRNAs; can also add nucleotides to the ends of RNA molecules by using nucleoside diphosphates as substrates, but this may not be physiologically important. Probably plays a role in initiation of 16S rRNA degradation (leading to ribosome degradation) during starvation. In Geobacillus sp. (strain WCH70), this protein is Ribonuclease PH.